The following is a 393-amino-acid chain: NAD(P)H-quinone oxidoreductase subunit H, chloroplastic (393 aa).

The protein belongs to the complex I 49 kDa subunit family. In terms of assembly, NDH is composed of at least 16 different subunits, 5 of which are encoded in the nucleus.

It is found in the plastid. Its subcellular location is the chloroplast thylakoid membrane. It carries out the reaction a plastoquinone + NADH + (n+1) H(+)(in) = a plastoquinol + NAD(+) + n H(+)(out). The catalysed reaction is a plastoquinone + NADPH + (n+1) H(+)(in) = a plastoquinol + NADP(+) + n H(+)(out). Its function is as follows. NDH shuttles electrons from NAD(P)H:plastoquinone, via FMN and iron-sulfur (Fe-S) centers, to quinones in the photosynthetic chain and possibly in a chloroplast respiratory chain. The immediate electron acceptor for the enzyme in this species is believed to be plastoquinone. Couples the redox reaction to proton translocation, and thus conserves the redox energy in a proton gradient. This is NAD(P)H-quinone oxidoreductase subunit H, chloroplastic from Ipomoea purpurea (Common morning glory).